Consider the following 311-residue polypeptide: Terpentetriene synthase (311 aa).

A DDXXD motif motif is present at residues 77–81; sequence DDRWD.

This sequence belongs to the terpene synthase family. As to quaternary structure, homodimer. Requires Mg(2+) as cofactor.

The catalysed reaction is terpentedienyl diphosphate = terpentetriene + diphosphate. Its pathway is antibiotic biosynthesis. Functionally, involved in the production of the isoprenoid antibiotic terpentecin. Converts terpentedienol diphosphate (TDP) into terpentetriene (TTE). Can also accept geranylgeranyl diphosphate (GGDP) and farnesyl diphosphate (FDP) as substrates. The protein is Terpentetriene synthase (cyc2) of Kitasatospora griseola (Streptomyces griseolosporeus).